Consider the following 338-residue polypeptide: Delta(9)-fatty-acid desaturase fat-7 (338 aa).

4 consecutive transmembrane segments (helical) span residues 51–71, 76–96, 194–214, and 218–238; these read VALF…LVFH, TAVF…AGAH, YFPL…VYFW, and AFIA…HATW.

This sequence belongs to the fatty acid desaturase type 1 family. As to expression, expressed in the intestine in adult worms and in all four larval stages.

It localises to the membrane. It catalyses the reaction octadecanoyl-CoA + 2 Fe(II)-[cytochrome b5] + O2 + 2 H(+) = (9Z)-octadecenoyl-CoA + 2 Fe(III)-[cytochrome b5] + 2 H2O. It carries out the reaction hexadecanoyl-CoA + 2 Fe(II)-[cytochrome b5] + O2 + 2 H(+) = (9Z)-hexadecenoyl-CoA + 2 Fe(III)-[cytochrome b5] + 2 H2O. The catalysed reaction is heptadecanoyl-CoA + 2 Fe(II)-[cytochrome b5] + O2 + 2 H(+) = (9Z)-heptadecenoyl-CoA + 2 Fe(III)-[cytochrome b5] + 2 H2O. The enzyme catalyses (11E)-octadecenoyl-CoA + 2 Fe(II)-[cytochrome b5] + O2 + 2 H(+) = (9Z,11E)-octadecadienoyl-CoA + 2 Fe(III)-[cytochrome b5] + 2 H2O. It functions in the pathway lipid metabolism; monounsaturated fatty acid biosynthesis. It participates in lipid metabolism; fatty acid metabolism. In terms of biological role, delta(9)-fatty acid desaturase that acts preferentially on stearoyl-CoA (octadecanoyl-CoA) producing the monounsaturated oleoyl-CoA ((9Z)-octadecenoyl-CoA), one of the most abundant monounsaturated fatty acid in Caenorhabditis elegans phospholipids and triacylglycerols. Also acts on palmitoyl-CoA (hexadecanoyl-CoA), heptadecanoyl-CoA and (11E)-octadecenoyl-CoA (trans-vaccenoyl-CoA), the monounsaturated fatty acids (MUFAs) produced are further used by several other desaturases and elongases as substrates to synthesize polyunsaturated fatty acids (PUFAs) endogenously (PUFAs are essential for membrane structure and many cellular and physiological processes). Unlike plants, Caenorhabditis elegans desaturases seem to use fatty acyl-CoAs as substrates. Partially inhibits expression of genes involved in beta-oxidation, such as ech-1 and acs-2, perhaps signaling via the actions of one of its fatty acid products. May form part of a negative feedback loop with the transcription factor nhr-49 to limit beta-oxidation, in which nhr-49 stimulates expression of fat-7 and acs-2, and in turn fat-7 indirectly inhibits acs-2 and other genes also involved in beta-oxidation. This Caenorhabditis elegans protein is Delta(9)-fatty-acid desaturase fat-7 (fat-7).